Here is an 856-residue protein sequence, read N- to C-terminus: Rab effector MyRIP (856 aa).

In terms of domain architecture, RabBD spans 4 to 124 (KLDLSGLTDD…TQSLEWFYNN (121 aa)). The segment at 63-105 (CCMRCCSPFTFLVNARRRCGECKFSVCKSCCSYQKHEKLWVCC) adopts an FYVE-type zinc-finger fold. The segment at 143–560 (RKHRLESGAC…AQVSDNVSET (418 aa)) is myosin-binding. The segment at 193-209 (VALRVAEEAIEEAISKA) is PRKAR2A-binding. The negative regulation of PRKAR2A-binding stretch occupies residues 232–248 (LTEELAGTILQRIIRKQ). A disordered region spans residues 252-294 (AELRAEEEEPEWPRSQSGSVKARGEGTTAPPGRHKARATFRRS). Ser-299 and Ser-351 each carry phosphoserine. 4 disordered regions span residues 351 to 578 (SPDG…SVEE), 592 to 625 (SEKETSSGEDQESESKAEPKNQKGSLSSEENNQG), 778 to 806 (RRDQKQRSQVQTIDTSRQQRRKLPAPPVK), and 826 to 856 (LLQGSSTNRPTASTGDTKDLMEPDLESAVMY). Residues 395-405 (IGSDSEEDFDY) are compositionally biased toward acidic residues. 2 stretches are compositionally biased toward low complexity: residues 427 to 437 (PTQAQSSGQGP) and 450 to 460 (SDSETSSTSSS). The segment at 495–856 (FNPQAAGGET…EPDLESAVMY (362 aa)) is actin-binding. Composition is skewed to polar residues over residues 551-574 (AQVSDNVSETDISNETQNSRSSTD), 613-625 (QKGSLSSEENNQG), 784-793 (RSQVQTIDTS), and 826-840 (LLQGSSTNRPTASTG).

As to quaternary structure, binds RAB27A that has been activated by GTP-binding via its N-terminus. Binds MYO5A, MYO7A and F-actin. Interacts with PRKAR2A. Interacts with components of the exocyst complex, including EXOC3 and EXOC4. Detected in brain, skin, heart, lung, adrenal medulla, pancreas, intestine, liver, kidney, skeletal muscle and testis. Detected in cochlear and vestibular hair cells in the inner ear, and in photoreceptor and pigment epithelium cells in the retina.

Its subcellular location is the cytoplasm. It localises to the perinuclear region. The protein resides in the cytoplasmic vesicle. The protein localises to the secretory vesicle. It is found in the melanosome. Functionally, rab effector protein involved in melanosome transport. Serves as link between melanosome-bound RAB27A and the motor proteins MYO5A and MYO7A. May link RAB27A-containing vesicles to actin filaments. Functions as a protein kinase A-anchoring protein (AKAP). May act as a scaffolding protein that links PKA to components of the exocytosis machinery, thus facilitating exocytosis, including insulin release. This Mus musculus (Mouse) protein is Rab effector MyRIP (Myrip).